A 273-amino-acid chain; its full sequence is 4-hydroxy-tetrahydrodipicolinate reductase (273 aa).

NAD(+) contacts are provided by residues 12 to 17 (GAGGRM) and Glu-38. NADP(+) is bound at residue Arg-39. Residues 102 to 104 (GTT) and 126 to 129 (AANF) each bind NAD(+). Catalysis depends on His-159, which acts as the Proton donor/acceptor. A (S)-2,3,4,5-tetrahydrodipicolinate-binding site is contributed by His-160. Lys-163 serves as the catalytic Proton donor. Residue 169-170 (GT) coordinates (S)-2,3,4,5-tetrahydrodipicolinate.

Belongs to the DapB family. As to quaternary structure, homotetramer.

The protein resides in the cytoplasm. It carries out the reaction (S)-2,3,4,5-tetrahydrodipicolinate + NAD(+) + H2O = (2S,4S)-4-hydroxy-2,3,4,5-tetrahydrodipicolinate + NADH + H(+). It catalyses the reaction (S)-2,3,4,5-tetrahydrodipicolinate + NADP(+) + H2O = (2S,4S)-4-hydroxy-2,3,4,5-tetrahydrodipicolinate + NADPH + H(+). The protein operates within amino-acid biosynthesis; L-lysine biosynthesis via DAP pathway; (S)-tetrahydrodipicolinate from L-aspartate: step 4/4. In terms of biological role, catalyzes the conversion of 4-hydroxy-tetrahydrodipicolinate (HTPA) to tetrahydrodipicolinate. This is 4-hydroxy-tetrahydrodipicolinate reductase from Escherichia coli (strain K12 / MC4100 / BW2952).